The sequence spans 175 residues: Austinoid biosynthesis cluster protein F (175 aa).

This sequence belongs to the trt14 isomerase family. As to quaternary structure, homodimer.

Its pathway is secondary metabolite biosynthesis; terpenoid biosynthesis. Its function is as follows. Part of the gene cluster that mediates the biosynthesis of calidodehydroaustin, a fungal meroterpenoid. The first step of the pathway is the synthesis of 3,5-dimethylorsellinic acid by the polyketide synthase ausA. 3,5-dimethylorsellinic acid is then prenylated by the polyprenyl transferase ausN. Further epoxidation by the FAD-dependent monooxygenase ausM and cyclization by the probable terpene cyclase ausL lead to the formation of protoaustinoid A. Protoaustinoid A is then oxidized to spiro-lactone preaustinoid A3 by the combined action of the FAD-binding monooxygenases ausB and ausC, and the dioxygenase ausE. Acid-catalyzed keto-rearrangement and ring contraction of the tetraketide portion of preaustinoid A3 by ausJ lead to the formation of preaustinoid A4. The aldo-keto reductase ausK, with the help of ausH, is involved in the next step by transforming preaustinoid A4 into isoaustinone which is in turn hydroxylated by the P450 monooxygenase ausI to form austinolide. The cytochrome P450 monooxygenase ausG modifies austinolide to austinol. Austinol is further acetylated to austin by the O-acetyltransferase ausP, which spontaneously changes to dehydroaustin. The cytochrome P450 monooxygenase ausR then converts dehydroaustin is into 7-dehydrodehydroaustin. The hydroxylation catalyzed by ausR permits the O-acetyltransferase ausQ to add an additional acetyl group to the molecule, leading to the formation of acetoxydehydroaustin. The short chain dehydrogenase ausT catalyzes the reduction of the double bond present between carbon atoms 1 and 2 to convert 7-dehydrodehydroaustin into 1,2-dihydro-7-hydroxydehydroaustin. AusQ catalyzes not only an acetylation reaction but also the addition of the PKS ausV diketide product to 1,2-dihydro-7-hydroxydehydroaustin, forming precalidodehydroaustin. Finally, the iron/alpha-ketoglutarate-dependent dioxygenase converts precalidodehydroaustin into calidodehydroaustin. The sequence is that of Austinoid biosynthesis cluster protein F from Aspergillus calidoustus.